A 255-amino-acid chain; its full sequence is tRNA (guanine-N(1)-)-methyltransferase (255 aa).

Residues Gly-113 and 133 to 138 each bind S-adenosyl-L-methionine; that span reads IGDYVL.

It belongs to the RNA methyltransferase TrmD family. Homodimer.

The protein resides in the cytoplasm. It catalyses the reaction guanosine(37) in tRNA + S-adenosyl-L-methionine = N(1)-methylguanosine(37) in tRNA + S-adenosyl-L-homocysteine + H(+). In terms of biological role, specifically methylates guanosine-37 in various tRNAs. This is tRNA (guanine-N(1)-)-methyltransferase from Salmonella agona (strain SL483).